Consider the following 507-residue polypeptide: 3-oxosteroid 1-dehydrogenase (507 aa).

9-38 contributes to the FAD binding site; that stretch reads DLLVVGSGGGALTGAYTAAAQGLTTIVLEK. Positions 299–385 are disordered; sequence GLVVDSPGSV…LPRPDYRPER (87 aa).

It belongs to the FAD-dependent oxidoreductase 2 family. 3-oxosteroid dehydrogenase subfamily. FAD serves as cofactor.

The protein localises to the cell membrane. The enzyme catalyses a 3-oxosteroid + A = a 3-oxo-Delta(1)-steroid + AH2. Its pathway is lipid metabolism; steroid degradation. In terms of biological role, catalyzes the elimination of the C-1 and C-2 hydrogen atoms of the A-ring from the polycyclic ring structure of 3-ketosteroids. The polypeptide is 3-oxosteroid 1-dehydrogenase (Rhodococcus opacus (Nocardia opaca)).